A 517-amino-acid polypeptide reads, in one-letter code: Protein translocase subunit SecD (517 aa).

The next 6 membrane-spanning stretches (helical) occupy residues 5-25 (LRWITILIVFVVSLFFMFPLD), 357-377 (IWAGIIGVAAVIIFMLIYYKF), 380-400 (FIASIALLSNAIIILGAMGMF), 407-427 (PGIAGLILTMGMAIDANVLIF), 455-475 (IIDSNITTLIAGLVLFQFGTG), and 479-499 (GFAVTLTIGILSSIFTAVTLS).

The protein belongs to the SecD/SecF family. SecD subfamily. Forms a complex with SecF. Part of the essential Sec protein translocation apparatus which comprises SecA, SecYEG and auxiliary proteins SecDF. Other proteins may also be involved.

It is found in the cell inner membrane. In terms of biological role, part of the Sec protein translocase complex. Interacts with the SecYEG preprotein conducting channel. SecDF uses the proton motive force (PMF) to complete protein translocation after the ATP-dependent function of SecA. The sequence is that of Protein translocase subunit SecD from Calditerrivibrio nitroreducens (strain DSM 19672 / NBRC 101217 / Yu37-1).